The sequence spans 266 residues: Putative carbamate hydrolase RutD (266 aa).

The protein belongs to the AB hydrolase superfamily. Hydrolase RutD family.

It catalyses the reaction carbamate + 2 H(+) = NH4(+) + CO2. Functionally, involved in pyrimidine catabolism. May facilitate the hydrolysis of carbamate, a reaction that can also occur spontaneously. The sequence is that of Putative carbamate hydrolase RutD from Escherichia coli O111:H- (strain 11128 / EHEC).